Reading from the N-terminus, the 71-residue chain is Omega-conotoxin-like CnVIIE (71 aa).

The signal sequence occupies residues 1 to 22 (MKLTCVVIVAVLLLTACQLITA). A propeptide spanning residues 23 to 45 (DDSRGTQKHRALRSDTKLSMSTR) is cleaved from the precursor. Cystine bridges form between C46/C61, C53/C65, and C60/C70. Position 52 is a 4-hydroxyproline; partial (P52). Cysteine amide is present on C70.

The protein belongs to the conotoxin M superfamily. As to expression, expressed by the venom duct.

Its subcellular location is the secreted. Functionally, omega-conotoxins act at presynaptic membranes, they bind and block voltage-gated calcium channels (Cav). This Conus consors (Singed cone) protein is Omega-conotoxin-like CnVIIE.